The following is a 110-amino-acid chain: Phosphoribosyl-ATP pyrophosphatase (110 aa).

Belongs to the PRA-PH family.

It is found in the cytoplasm. The enzyme catalyses 1-(5-phospho-beta-D-ribosyl)-ATP + H2O = 1-(5-phospho-beta-D-ribosyl)-5'-AMP + diphosphate + H(+). Its pathway is amino-acid biosynthesis; L-histidine biosynthesis; L-histidine from 5-phospho-alpha-D-ribose 1-diphosphate: step 2/9. The chain is Phosphoribosyl-ATP pyrophosphatase from Pseudomonas fluorescens (strain ATCC BAA-477 / NRRL B-23932 / Pf-5).